The chain runs to 277 residues: RNA-binding protein pno-1 (277 aa).

Disordered regions lie at residues 1–52 (MATS…KLVK) and 72–100 (DEDA…GESR). A compositionally biased stretch (acidic residues) spans 8–27 (FDDELPMEEGMPELLDDEDV). The span at 30-40 (TLPSLLEQNLD) shows a compositional bias: polar residues. Residues 72 to 81 (DEDATADTAD) show a composition bias toward acidic residues. The 53-residue stretch at 198–250 (GDHVSRAIGRIAGKDGRTKLVIENTTKTRIVVANTKIHILGAYQNLKLARNAV) folds into the KH domain.

The protein belongs to the PNO1 family. As to quaternary structure, part of the small subunit (SSU) processome, composed of more than 70 proteins and the RNA chaperone small nucleolar RNA (snoRNA) U3.

The protein resides in the nucleus. Its subcellular location is the nucleolus. Functionally, part of the small subunit (SSU) processome, first precursor of the small eukaryotic ribosomal subunit. During the assembly of the SSU processome in the nucleolus, many ribosome biogenesis factors, an RNA chaperone and ribosomal proteins associate with the nascent pre-rRNA and work in concert to generate RNA folding, modifications, rearrangements and cleavage as well as targeted degradation of pre-ribosomal RNA by the RNA exosome. Positively regulates dimethylation of two adjacent adenosines in the loop of a conserved hairpin near the 3'-end of 18S rRNA. This chain is RNA-binding protein pno-1, found in Caenorhabditis elegans.